The chain runs to 632 residues: MDLGSSSDSAPDCWDQVDMEAPGSAPSGDGIAPAAMAAAEAAEAEAQRKHLSLAFSSQLNIHAKPFVPSVSAAEFVPSFLPGSAQPPAPTASSCDETCIGGAGEPEGKRMEWGAPVEPSKDGPLVSWEGSSSVVTMELSEPVVENGEVEMALEESWELKEVSEAKPEASLGDAGPPEESVKEVMEEKEEVRKSKSVSIPSGAPKKEHVNVVFIGHVDAGKSTIGGQIMFLTGMVDRRTLEKYEREAKEKNRETWYLSWALDTNQEERDKGKTVEVGRAYFETEKKHFTILDAPGHKSFVPNMIGGASQADLAVLVISARKGEFETGFEKGGQTREHAMLAKTAGVKYLIVLINKMDDPTVDWSSERYEECKEKLVPFLKKVGFSPKKDIHFMPCSGLTGANIKEQSDFCPWYTGLPFIPYLDSLPNFNRSIDGPIRLPIVDKYKDMGTVVLGKLESGSIFKGQQLVMMPNKHSVEVLGIVSDDAETDFVAPGENLKIRLKGIEEEEILPGFILCEPSNLCHSGRTFDVQIVIIEHKSIICPGYNAVLHIHTCIEEVEITALISLVDKKSGEKSKTRPRFVKQDQVCIARLRTAGTICLETFKDFPQMGRFTLRDEGKTIAIGKVLKLVPEKD.

Disordered stretches follow at residues 1–31 (MDLG…GDGI) and 162–200 (SEAK…SIPS). Positions 178–192 (ESVKEVMEEKEEVRK) are enriched in basic and acidic residues. One can recognise a tr-type G domain in the interval 205–429 (KEHVNVVFIG…YLDSLPNFNR (225 aa)). Positions 214-221 (GHVDAGKS) are G1. Residue 217–222 (DAGKST) coordinates GTP. The G2 stretch occupies residues 270–274 (GKTVE). The segment at 291–294 (DAPG) is G3. GTP contacts are provided by residues 353–356 (NKMD) and 395–397 (SGL). The G4 stretch occupies residues 353–356 (NKMD). Residues 395–397 (SGL) are G5.

It belongs to the TRAFAC class translation factor GTPase superfamily. Classic translation factor GTPase family. ERF3 subfamily. As to quaternary structure, component of the eRF1-eRF3-GTP ternary complex, composed of ETF1/ERF1 and ERF3 (GSPT1/ERF3A or GSPT2/ERF3B) and GTP. Component of the transient SURF (SMG1-UPF1-eRF1-eRF3) complex. Interacts with UPF1 and PABPC1. As to expression, highly expressed in brain. Moderately expressed in spleen and lung. Weakly expressed in heart, liver and kidney. Expression during the cell-cycle progression is constant.

The protein localises to the cytoplasm. The catalysed reaction is GTP + H2O = GDP + phosphate + H(+). Its function is as follows. GTPase component of the eRF1-eRF3-GTP ternary complex, a ternary complex that mediates translation termination in response to the termination codons UAA, UAG and UGA. GSPT2/ERF3B mediates ETF1/ERF1 delivery to stop codons: The eRF1-eRF3-GTP complex binds to a stop codon in the ribosomal A-site. GTP hydrolysis by GSPT2/ERF3B induces a conformational change that leads to its dissociation, permitting ETF1/ERF1 to accommodate fully in the A-site. Component of the transient SURF complex which recruits UPF1 to stalled ribosomes in the context of nonsense-mediated decay (NMD) of mRNAs containing premature stop codons. The polypeptide is Eukaryotic peptide chain release factor GTP-binding subunit ERF3B (Gspt2) (Mus musculus (Mouse)).